Here is a 245-residue protein sequence, read N- to C-terminus: uncharacterized protein (245 aa).

Transmembrane regions (helical) follow at residues 10–30 (FYTL…SPWY), 94–114 (TLAF…YVHI), 134–154 (VLIG…FLII), and 196–216 (RGWI…IYCW).

It localises to the membrane. This is an uncharacterized protein from Dictyostelium discoideum (Social amoeba).